A 333-amino-acid chain; its full sequence is Putative ketol-acid reductoisomerase 2 (333 aa).

In terms of domain architecture, KARI N-terminal Rossmann spans 1–182 (MDKTVLDANL…AIPGGIAVIS (182 aa)). The 147-residue stretch at 183-329 (SFEEEALLDL…KELYKLLGRK (147 aa)) folds into the KARI C-terminal knotted domain.

The protein belongs to the ketol-acid reductoisomerase family.

The catalysed reaction is (2R)-2,3-dihydroxy-3-methylbutanoate + NADP(+) = (2S)-2-acetolactate + NADPH + H(+). It carries out the reaction (2R,3R)-2,3-dihydroxy-3-methylpentanoate + NADP(+) = (S)-2-ethyl-2-hydroxy-3-oxobutanoate + NADPH + H(+). The protein operates within amino-acid biosynthesis; L-isoleucine biosynthesis; L-isoleucine from 2-oxobutanoate: step 2/4. Its pathway is amino-acid biosynthesis; L-valine biosynthesis; L-valine from pyruvate: step 2/4. The polypeptide is Putative ketol-acid reductoisomerase 2 (ilvC2) (Saccharolobus solfataricus (strain ATCC 35092 / DSM 1617 / JCM 11322 / P2) (Sulfolobus solfataricus)).